A 327-amino-acid polypeptide reads, in one-letter code: Small ribosomal subunit protein RACK1 (327 aa).

7 WD repeats span residues 13-44 (AHTD…IVWK), 61-91 (GHSH…RLWD), 103-133 (GHTK…KLWN), 148-180 (GHRD…KVWN), 192-222 (GHTG…LLWD), 233-262 (EANS…KIWD), and 293-323 (RKVI…RVWG).

Belongs to the WD repeat G protein beta family. Ribosomal protein RACK1 subfamily.

In Brassica napus (Rape), this protein is Small ribosomal subunit protein RACK1 (GB1).